A 459-amino-acid polypeptide reads, in one-letter code: MAADVGQALAFLQQVKTTQGASIYEGLKAALAKVLEDRPVNAVEALETSVLSTPPAANLSVPLVPAASAAAAAAAVAKASLFGDPEPVLDPESGEPIDPDAPNEFECEDVEGDGDLLDGLGVGLGRQEMYAAMLAVKRLGEDAKRGVSTVRFFGKFFGTQADYYVFETTLQSNPDMPEAPEGTIPLEPYGEGVNAYIYFVSNTLGGPLQQLPYVTPEQIKASRLLRRYLTGRLDAPVSAFPAFPGNEANYLRALIARISAATVCCPRGFFTADDDSAELSANDEWVPLKGREMALPVNWSHRYAHLKGQGRTVTHKRDPPDEEEEPEKNFWTAEEMEAGPPPLATLDTDAPLPAATGDKVPPPAWSPVFASASVTTRNQVAGVRSNRWPGAVCACAGRHFTSMYVGWGIKAGGEWSPCPPPPPVPQWGAPAAGVEGGQQLLLECNDLPPKPAPPEEEDE.

R267 is modified (asymmetric dimethylarginine). A disordered region spans residues 309–330 (QGRTVTHKRDPPDEEEEPEKNF). An Asymmetric dimethylarginine modification is found at R398. The disordered stretch occupies residues 418-459 (CPPPPPVPQWGAPAAGVEGGQQLLLECNDLPPKPAPPEEEDE).

This sequence belongs to the flagellar radial spoke RSP4/6 family. As to quaternary structure, the radial spoke head is made of five different polypeptides (RSP1, RSP4, RSP6, RSP9, and RSP10). In terms of processing, asymmetrically dimethylated at Arg-267 and Arg-398 during flagellum resorption. Probably methylated by PRMT1.

The protein resides in the cytoplasm. The protein localises to the cytoskeleton. It localises to the flagellum axoneme. Functionally, flagellar radial spokes contribute to the regulation of dynein arm activity and thus the pattern of flagellar bending. They consist of a thin stalk, which is attached to the a subfiber of the outer doublet microtubule, and a bulbous head, which is attached to the stalk and appears to interact with the projections from the central pair of microtubules. The sequence is that of Flagellar radial spoke protein 6 (RSP6) from Chlamydomonas reinhardtii (Chlamydomonas smithii).